Reading from the N-terminus, the 131-residue chain is Large ribosomal subunit protein bL17 (131 aa).

It belongs to the bacterial ribosomal protein bL17 family. As to quaternary structure, part of the 50S ribosomal subunit. Contacts protein L32.

The polypeptide is Large ribosomal subunit protein bL17 (Burkholderia ambifaria (strain MC40-6)).